Here is a 105-residue protein sequence, read N- to C-terminus: NADH-quinone oxidoreductase subunit K (105 aa).

3 helical membrane passes run 7 to 27 (IGVNHFLTISVLLFSLGMFAV), 34 to 54 (IVILMGVELILNAANINFLTF), and 66 to 86 (FSLFVIVLAAAEAAVALAIVI).

The protein belongs to the complex I subunit 4L family. As to quaternary structure, NDH-1 is composed of 14 different subunits. Subunits NuoA, H, J, K, L, M, N constitute the membrane sector of the complex.

The protein localises to the cell inner membrane. It carries out the reaction a quinone + NADH + 5 H(+)(in) = a quinol + NAD(+) + 4 H(+)(out). Functionally, NDH-1 shuttles electrons from NADH, via FMN and iron-sulfur (Fe-S) centers, to quinones in the respiratory chain. The immediate electron acceptor for the enzyme in this species is believed to be a menaquinone. Couples the redox reaction to proton translocation (for every two electrons transferred, four hydrogen ions are translocated across the cytoplasmic membrane), and thus conserves the redox energy in a proton gradient. This chain is NADH-quinone oxidoreductase subunit K, found in Chlorobaculum parvum (strain DSM 263 / NCIMB 8327) (Chlorobium vibrioforme subsp. thiosulfatophilum).